Consider the following 550-residue polypeptide: Protein UshA (550 aa).

Positions 1–25 (MRFSLSTTAAALAVSLAFAPGWAVA) are cleaved as a signal peptide. A divalent metal cation contacts are provided by Asp-41, His-43, Asp-84, Asn-116, His-217, His-252, and Gln-254. Cys-258 and Cys-275 are joined by a disulfide. Residues 375–379 (RSKVR) and 498–504 (FNALGGD) contribute to the substrate site.

It belongs to the 5'-nucleotidase family. The cofactor is Co(2+).

It is found in the periplasm. The catalysed reaction is UDP-sugar + H2O = UMP + alpha-D-aldose 1-phosphate.. The enzyme catalyses a ribonucleoside 5'-phosphate + H2O = a ribonucleoside + phosphate. Functionally, degradation of external UDP-glucose to uridine monophosphate and glucose-1-phosphate, which can then be used by the cell. This Yersinia enterocolitica serotype O:8 / biotype 1B (strain NCTC 13174 / 8081) protein is Protein UshA (ushA).